A 180-amino-acid polypeptide reads, in one-letter code: NAD(P)H-quinone oxidoreductase subunit 6, chloroplastic (180 aa).

The next 5 membrane-spanning stretches (helical) occupy residues 10 to 30, 32 to 52, 57 to 77, 95 to 115, and 153 to 173; these read ILLV…VLLT, IIYS…LYIL, FVAA…IVFA, VGDG…ITII, and FLPF…AITI.

It belongs to the complex I subunit 6 family. In terms of assembly, NDH is composed of at least 16 different subunits, 5 of which are encoded in the nucleus.

Its subcellular location is the plastid. The protein localises to the chloroplast thylakoid membrane. The enzyme catalyses a plastoquinone + NADH + (n+1) H(+)(in) = a plastoquinol + NAD(+) + n H(+)(out). The catalysed reaction is a plastoquinone + NADPH + (n+1) H(+)(in) = a plastoquinol + NADP(+) + n H(+)(out). Functionally, NDH shuttles electrons from NAD(P)H:plastoquinone, via FMN and iron-sulfur (Fe-S) centers, to quinones in the photosynthetic chain and possibly in a chloroplast respiratory chain. The immediate electron acceptor for the enzyme in this species is believed to be plastoquinone. Couples the redox reaction to proton translocation, and thus conserves the redox energy in a proton gradient. This chain is NAD(P)H-quinone oxidoreductase subunit 6, chloroplastic (ndhG), found in Cycas taitungensis (Prince sago).